We begin with the raw amino-acid sequence, 405 residues long: Argininosuccinate synthase (405 aa).

Residues 10-18 (AYSGGLDTS) and Ala37 each bind ATP. Tyr88 and Ser93 together coordinate L-citrulline. Gly118 contacts ATP. 3 residues coordinate L-aspartate: Thr120, Asn124, and Asp125. Position 124 (Asn124) interacts with L-citrulline. Residues Arg128, Ser179, Ser188, Glu264, and Tyr276 each contribute to the L-citrulline site.

This sequence belongs to the argininosuccinate synthase family. Type 1 subfamily. As to quaternary structure, homotetramer.

Its subcellular location is the cytoplasm. It catalyses the reaction L-citrulline + L-aspartate + ATP = 2-(N(omega)-L-arginino)succinate + AMP + diphosphate + H(+). Its pathway is amino-acid biosynthesis; L-arginine biosynthesis; L-arginine from L-ornithine and carbamoyl phosphate: step 2/3. In Pseudomonas fluorescens (strain SBW25), this protein is Argininosuccinate synthase.